Reading from the N-terminus, the 123-residue chain is Large ribosomal subunit protein bL17 (123 aa).

This sequence belongs to the bacterial ribosomal protein bL17 family. In terms of assembly, part of the 50S ribosomal subunit. Contacts protein L32.

This Exiguobacterium sibiricum (strain DSM 17290 / CCUG 55495 / CIP 109462 / JCM 13490 / 255-15) protein is Large ribosomal subunit protein bL17.